Consider the following 271-residue polypeptide: 4-hydroxy-tetrahydrodipicolinate reductase (271 aa).

NAD(+) is bound by residues 11–16 and E37; that span reads GGSGRM. Residue R38 participates in NADP(+) binding. NAD(+) is bound by residues 101–103 and 125–128; these read GTT and APNM. H158 acts as the Proton donor/acceptor in catalysis. H159 is a (S)-2,3,4,5-tetrahydrodipicolinate binding site. K162 serves as the catalytic Proton donor. Position 168-169 (168-169) interacts with (S)-2,3,4,5-tetrahydrodipicolinate; sequence GT.

Belongs to the DapB family.

The protein resides in the cytoplasm. The catalysed reaction is (S)-2,3,4,5-tetrahydrodipicolinate + NAD(+) + H2O = (2S,4S)-4-hydroxy-2,3,4,5-tetrahydrodipicolinate + NADH + H(+). It carries out the reaction (S)-2,3,4,5-tetrahydrodipicolinate + NADP(+) + H2O = (2S,4S)-4-hydroxy-2,3,4,5-tetrahydrodipicolinate + NADPH + H(+). Its pathway is amino-acid biosynthesis; L-lysine biosynthesis via DAP pathway; (S)-tetrahydrodipicolinate from L-aspartate: step 4/4. Catalyzes the conversion of 4-hydroxy-tetrahydrodipicolinate (HTPA) to tetrahydrodipicolinate. The protein is 4-hydroxy-tetrahydrodipicolinate reductase of Shewanella halifaxensis (strain HAW-EB4).